A 119-amino-acid chain; its full sequence is Large ribosomal subunit protein uL24 (119 aa).

This sequence belongs to the universal ribosomal protein uL24 family. As to quaternary structure, part of the 50S ribosomal subunit.

Its function is as follows. One of two assembly initiator proteins, it binds directly to the 5'-end of the 23S rRNA, where it nucleates assembly of the 50S subunit. Located at the polypeptide exit tunnel on the outside of the subunit. In Haloquadratum walsbyi (strain DSM 16790 / HBSQ001), this protein is Large ribosomal subunit protein uL24.